Consider the following 172-residue polypeptide: Translocator protein 2 (172 aa).

Transmembrane regions (helical) follow at residues 3-23 (PQGA…SLLT), 45-65 (VLLA…YLVW), 80-100 (LGLY…FFAA), 104-124 (GLAL…ALIW), and 130-150 (LAAV…SIAY).

This sequence belongs to the TspO/BZRP family. As to quaternary structure, homotetramer. May also form homodimer. As to expression, expressed in erythrocytes (at protein level).

It localises to the endoplasmic reticulum membrane. It is found in the cell membrane. Functionally, cholesterol-binding protein involved in the redistribution of cholesterol from lipid droplets to the endoplasmic reticulum. Required to meet cholesterol demands during erythropoietic differentiation. May play a role in transport processes at the plasma membrane of erythrocytes, including regulating VDAC-mediated ATP export, and import of the heme precursors protoporphyrin IX and 5-aminolevulinic acid. This Canis lupus familiaris (Dog) protein is Translocator protein 2.